The sequence spans 121 residues: Met-lysine-1b (121 aa).

An N-terminal signal peptide occupies residues 1–22 (MKSFVFALALIVAFACISESKS). Positions 23–69 (DHTGYEEEENLEDSELTDLVAAALLEELAEASEMDDLSYTEEAGGER) are excised as a propeptide. The residue at position 120 (methionine 120) is a Methionine amide.

As to expression, expressed by the venom gland.

The protein localises to the secreted. Shows no antimicrobial activity against Gram-positive bacterium B.subtilis B-501 or Gram-negative bacterium E.coli DH5-alpha at concentrations up to 20 ug/ml. Shows no toxicity towards insect (S.carnaria) larvae. This is Met-lysine-1b from Lachesana tarabaevi (Spider).